Here is a 399-residue protein sequence, read N- to C-terminus: MSKAKFERTKPHVNIGTIGHVDHGKTTLTAAITQTMAARGLAEFKAFDQIDNAPEERERGITIATAHVEYQTDTRHYAHVDCPGHADYVKNMITGAAQMDGAILVVSAADGPMPQTREHILLARQVGVPAMVVFLNKADMVDDEELMELVELEVRELLSSYDFPGDDIPIVAGSALKALECGCGKDDCDACKPIIELMNQVDGYIPEPERDIDKPFLMPVEDVFSISGRGTVATGRVERGIVCVQDEIEIVGMKETTKTVVTGVEMFRKLLDQGQAGDNIGVLLRGVKREDIERGQVLAKPGSITPHTKFKAEAYILTKEEGGRHTPFFNGYRPQFYFRTTDVTGICELAEGTEMVMPGDNASMTVNLITPIAMDKELRFAIREGGRTVGAGVVSDIIE.

The tr-type G domain occupies 10–209 (KPHVNIGTIG…QVDGYIPEPE (200 aa)). Positions 19 to 26 (GHVDHGKT) are G1. Residue 19–26 (GHVDHGKT) coordinates GTP. Thr-26 serves as a coordination point for Mg(2+). The interval 60–64 (GITIA) is G2. The segment at 81 to 84 (DCPG) is G3. GTP is bound by residues 81–85 (DCPGH) and 136–139 (NKAD). The segment at 136–139 (NKAD) is G4. The segment at 174–176 (SAL) is G5.

It belongs to the TRAFAC class translation factor GTPase superfamily. Classic translation factor GTPase family. EF-Tu/EF-1A subfamily. Monomer.

Its subcellular location is the cytoplasm. The catalysed reaction is GTP + H2O = GDP + phosphate + H(+). Its function is as follows. GTP hydrolase that promotes the GTP-dependent binding of aminoacyl-tRNA to the A-site of ribosomes during protein biosynthesis. This Syntrophotalea carbinolica (strain DSM 2380 / NBRC 103641 / GraBd1) (Pelobacter carbinolicus) protein is Elongation factor Tu 2.